Here is a 325-residue protein sequence, read N- to C-terminus: Cytochrome f (325 aa).

Residues 1–40 (MKTPELMAIWQRLKTACLVAIATFGLFFASDVLFPQAAAA) form the signal peptide. Residues Y41, C62, C65, and H66 each coordinate heme. Residues 290 to 309 (IYGYMAFVAGIMLTQIFLVL) form a helical membrane-spanning segment.

The protein belongs to the cytochrome f family. The 4 large subunits of the cytochrome b6-f complex are cytochrome b6, subunit IV (17 kDa polypeptide, PetD), cytochrome f and the Rieske protein, while the 4 small subunits are PetG, PetL, PetM and PetN. The complex functions as a dimer. Requires heme as cofactor.

It localises to the cellular thylakoid membrane. In terms of biological role, component of the cytochrome b6-f complex, which mediates electron transfer between photosystem II (PSII) and photosystem I (PSI), cyclic electron flow around PSI, and state transitions. The sequence is that of Cytochrome f (petA) from Picosynechococcus sp. (strain ATCC 27264 / PCC 7002 / PR-6) (Agmenellum quadruplicatum).